Consider the following 377-residue polypeptide: Methylthioribose-1-phosphate isomerase (377 aa).

Residue aspartate 254 is the Proton donor of the active site.

It belongs to the eIF-2B alpha/beta/delta subunits family. MtnA subfamily.

It localises to the cytoplasm. The protein resides in the nucleus. It catalyses the reaction 5-(methylsulfanyl)-alpha-D-ribose 1-phosphate = 5-(methylsulfanyl)-D-ribulose 1-phosphate. The protein operates within amino-acid biosynthesis; L-methionine biosynthesis via salvage pathway; L-methionine from S-methyl-5-thio-alpha-D-ribose 1-phosphate: step 1/6. Catalyzes the interconversion of methylthioribose-1-phosphate (MTR-1-P) into methylthioribulose-1-phosphate (MTRu-1-P). The protein is Methylthioribose-1-phosphate isomerase (mri1) of Aspergillus terreus (strain NIH 2624 / FGSC A1156).